The chain runs to 86 residues: Small ribosomal subunit protein bS18 (86 aa).

It belongs to the bacterial ribosomal protein bS18 family. As to quaternary structure, part of the 30S ribosomal subunit. Forms a tight heterodimer with protein bS6.

In terms of biological role, binds as a heterodimer with protein bS6 to the central domain of the 16S rRNA, where it helps stabilize the platform of the 30S subunit. The sequence is that of Small ribosomal subunit protein bS18 from Campylobacter jejuni subsp. jejuni serotype O:6 (strain 81116 / NCTC 11828).